The chain runs to 494 residues: Adenosylhomocysteinase (494 aa).

Residues Thr-72, Asp-155, and Glu-217 each coordinate substrate. NAD(+) is bound at residue 218-220 (TTT). Substrate-binding residues include Lys-247 and Asp-251. Residues Asn-252, 281–286 (GYGDVG), Glu-304, Asn-339, 360–362 (IGH), and Asn-408 each bind NAD(+).

The protein belongs to the adenosylhomocysteinase family. NAD(+) is required as a cofactor.

The protein localises to the cytoplasm. It carries out the reaction S-adenosyl-L-homocysteine + H2O = L-homocysteine + adenosine. The protein operates within amino-acid biosynthesis; L-homocysteine biosynthesis; L-homocysteine from S-adenosyl-L-homocysteine: step 1/1. Functionally, may play a key role in the regulation of the intracellular concentration of adenosylhomocysteine. In Nocardia farcinica (strain IFM 10152), this protein is Adenosylhomocysteinase.